The following is a 473-amino-acid chain: UDP-N-acetylmuramate--L-alanine ligase (473 aa).

114-120 contacts ATP; that stretch reads GTHGKTT.

Belongs to the MurCDEF family.

Its subcellular location is the cytoplasm. It carries out the reaction UDP-N-acetyl-alpha-D-muramate + L-alanine + ATP = UDP-N-acetyl-alpha-D-muramoyl-L-alanine + ADP + phosphate + H(+). Its pathway is cell wall biogenesis; peptidoglycan biosynthesis. Cell wall formation. The chain is UDP-N-acetylmuramate--L-alanine ligase from Chlorobium luteolum (strain DSM 273 / BCRC 81028 / 2530) (Pelodictyon luteolum).